The sequence spans 290 residues: MLKTVHQKAGRHTRPVRAWLKLLWQRIDEDNMTTLAGNLAYVSLLSLVPLIAVVFALFAAFPMFSDVSIQLRHFIFANFMPATGDVIQRYIEQFVANSNKMTAVGACGLIVTALLLMYAIDSALNTIWRSKRTRPKVYSFAVYWMILTLGPLLAGASLAISSYLLSLRWASDLNTVIDNVLRVLPLLLSWISFWLLYSIVPTTRVPNRDAIVGAFVAALLFEAGKKGFALYITMFPSYQLIYGVLAVIPILFVWVYWTWCIVLLGAEITVTLGEYRKLKQAAEQEEADQP.

6 helical membrane-spanning segments follow: residues 44 to 64 (LLSL…FPMF), 104 to 124 (VGAC…DSAL), 140 to 160 (FAVY…SLAI), 183 to 203 (VLPL…VPTT), 210 to 230 (AIVG…GFAL), and 244 to 264 (VLAV…IVLL).

Belongs to the UPF0761 family.

Its subcellular location is the cell inner membrane. This is UPF0761 membrane protein YihY from Salmonella arizonae (strain ATCC BAA-731 / CDC346-86 / RSK2980).